The primary structure comprises 343 residues: L-threonine 3-dehydrogenase (343 aa).

C38 contacts Zn(2+). Active-site charge relay system residues include T40 and H43. Residues H63, E64, C93, C96, C99, and C107 each contribute to the Zn(2+) site. NAD(+) is bound by residues I175, D195, R200, 262 to 264 (LGL), and 286 to 287 (IY).

This sequence belongs to the zinc-containing alcohol dehydrogenase family. Homotetramer. The cofactor is Zn(2+).

The protein localises to the cytoplasm. The catalysed reaction is L-threonine + NAD(+) = (2S)-2-amino-3-oxobutanoate + NADH + H(+). Its pathway is amino-acid degradation; L-threonine degradation via oxydo-reductase pathway; glycine from L-threonine: step 1/2. Catalyzes the NAD(+)-dependent oxidation of L-threonine to 2-amino-3-ketobutyrate. This is L-threonine 3-dehydrogenase from Saccharopolyspora erythraea (strain ATCC 11635 / DSM 40517 / JCM 4748 / NBRC 13426 / NCIMB 8594 / NRRL 2338).